Here is a 1177-residue protein sequence, read N- to C-terminus: DNA-directed RNA polymerase subunit beta (1177 aa).

The segment covering 1147–1161 (DDTEIEMRDTEDDDD) has biased composition (acidic residues). The interval 1147–1177 (DDTEIEMRDTEDDDDHQSADKLNVEVETTKE) is disordered. Basic and acidic residues predominate over residues 1162–1177 (HQSADKLNVEVETTKE).

Belongs to the RNA polymerase beta chain family. In terms of assembly, the RNAP catalytic core consists of 2 alpha, 1 beta, 1 beta' and 1 omega subunit. When a sigma factor is associated with the core the holoenzyme is formed, which can initiate transcription.

It carries out the reaction RNA(n) + a ribonucleoside 5'-triphosphate = RNA(n+1) + diphosphate. In terms of biological role, DNA-dependent RNA polymerase catalyzes the transcription of DNA into RNA using the four ribonucleoside triphosphates as substrates. This Bacillus thuringiensis (strain Al Hakam) protein is DNA-directed RNA polymerase subunit beta.